The following is a 247-amino-acid chain: 14-3-3 protein gamma (247 aa).

M1 carries the N-acetylmethionine modification. V2 carries the N-acetylvaline; in 14-3-3 protein gamma, N-terminally processed modification. The tract at residues 2–247 (VDREQLVQKA…QDDDGGEGNN (246 aa)) is interaction with SPATA18/MIEAP. At S71 the chain carries Phosphoserine. Phosphotyrosine is present on Y133. T145 is subject to Phosphothreonine. S215 carries the post-translational modification Phosphoserine. T234 is subject to Phosphothreonine. S235 is subject to Phosphoserine.

Belongs to the 14-3-3 family. In terms of assembly, homodimer. Part of a complex that contains DSG3, PKP1, YAP1 and YWHAG; the complex is required for localization of DSG3 and YAP1 to the cell membrane in keratinocytes. Interacts with SAMSN1. Interacts with RAF1, SSH1 and CRTC2/TORC2. Interacts with ABL1 (phosphorylated form); the interaction retains it in the cytoplasm. Interacts with GAB2. Interacts with MDM4 (phosphorylated); negatively regulates MDM4 activity toward TP53. Interacts with PKA-phosphorylated AANAT and SIRT2. Interacts with the 'Thr-369' phosphorylated form of DAPK2. Interacts with PI4KB, TBC1D22A and TBC1D22B. Interacts with SLITRK1. Interacts with LRRK2; this interaction is dependent on LRRK2 phosphorylation. Interacts with MARK2 and MARK3. Interacts with MEFV. Interacts with ENDOG, TSC2 and PIK3C3; interaction with ENDOG weakens its interaction with TSC2 and PIK3C3. Interacts with (phosphorylated) WDR24. Interacts with BEST1; this interaction promotes L-glutamate channel activity leading to the positive regulation of NMDA glutamate receptor activity through the L-glutamate secretion. Interacts with PKP1 (when phosphorylated); the interaction results in translocation of PKP1 to the cytoplasm and loss of intercellular adhesion in keratinocytes. Interacts with SPATA18/MIEAP; a protein that also plays a role in MALM. Phosphorylated by various PKC isozymes.

It localises to the cytoplasm. The protein resides in the cytosol. It is found in the mitochondrion matrix. Adapter protein implicated in the regulation of a large spectrum of both general and specialized signaling pathways. Binds to a large number of partners, usually by recognition of a phosphoserine or phosphothreonine motif. Binding generally results in the modulation of the activity of the binding partner. Promotes inactivation of WDR24 component of the GATOR2 complex by binding to phosphorylated WDR24. Participates in the positive regulation of NMDA glutamate receptor activity by promoting the L-glutamate secretion through interaction with BEST1. Reduces keratinocyte intercellular adhesion, via interacting with PKP1 and sequestering it in the cytoplasm, thereby reducing its incorporation into desmosomes. Plays a role in mitochondrial protein catabolic process (also named MALM) that promotes the degradation of damaged proteins inside mitochondria. In Bos taurus (Bovine), this protein is 14-3-3 protein gamma.